The chain runs to 526 residues: PTS system alpha-glucoside-specific EIICB component (526 aa).

The PTS EIIC type-1 domain maps to 1 to 417; it reads MLKHFQRLGG…YNVKTSGRED (417 aa). 12 helical membrane-spanning segments follow: residues 12-32, 59-79, 88-108, 132-152, 173-193, 200-220, 224-244, 274-294, 305-325, 330-350, 355-375, and 381-401; these read LFAP…TIIL, GWTV…IGLA, LAVL…LTFW, IKTL…TIYI, LVSA…CLVW, ISSL…LYTF, ILIP…GPAV, GGFA…ALAM, IVSG…ITEP, FLFI…TMAA, FGVV…WLPL, and GVMF…YLVF. One can recognise a PTS EIIB type-1 domain in the interval 447-526; the sequence is SGKAKAFLEA…ESFENLMEQN (80 aa). Cys469 acts as the Phosphocysteine intermediate; for EIIB activity in catalysis.

It localises to the cell membrane. The phosphoenolpyruvate-dependent sugar phosphotransferase system (sugar PTS), a major carbohydrate active -transport system, catalyzes the phosphorylation of incoming sugar substrates concomitantly with their translocation across the cell membrane. This system is involved in alpha-glucoside transport. This chain is PTS system alpha-glucoside-specific EIICB component (malB), found in Fusobacterium mortiferum.